The chain runs to 517 residues: Methionine aminopeptidase 1b (517 aa).

Residues 74-94 form a disordered region; sequence YCNKENSNNNNNNNNNNNNNL. A compositionally biased stretch (low complexity) spans 79–94; it reads NSNNNNNNNNNNNNNL. Residues 114–166 form a C6H2-type zinc finger; the sequence is ENLCSGCKKVLIKKLSCPICLKNKIFSYFCNQECFKGSWKEHQKIHENMNKEN. Zn(2+) contacts are provided by Cys117, Cys120, Cys130, Cys133, Cys143, Cys147, His155, and His159. His325 provides a ligand contact to a protein. 3 residues coordinate Zn(2+): Asp342, Asp353, and His419. His426 is an a protein binding site. Positions 452 and 483 each coordinate Zn(2+).

This sequence belongs to the peptidase M24A family. Methionine aminopeptidase type 1 subfamily. Associates with the 60S ribosomal subunit of the 80S translational complex. Zn(2+) is required as a cofactor. The cofactor is Co(2+). It depends on Mn(2+) as a cofactor. Fe(2+) serves as cofactor.

The protein resides in the cytoplasm. It catalyses the reaction Release of N-terminal amino acids, preferentially methionine, from peptides and arylamides.. Its activity is regulated as follows. Inhibited by pyrimidine derivative XC11. Its function is as follows. Cotranslationally removes the N-terminal methionine from nascent proteins. The N-terminal methionine is often cleaved when the second residue in the primary sequence is small and uncharged (Met-Ala-, Cys, Gly, Pro, Ser, Thr, or Val). May play an important role in parasite growth during the blood asexual stage. This chain is Methionine aminopeptidase 1b, found in Plasmodium falciparum (isolate 3D7).